We begin with the raw amino-acid sequence, 271 residues long: Thiazole synthase (271 aa).

K104 (schiff-base intermediate with DXP) is an active-site residue. Residues G165, A192–G193, and N214–T215 contribute to the 1-deoxy-D-xylulose 5-phosphate site.

The protein belongs to the ThiG family. Homotetramer. Forms heterodimers with either ThiH or ThiS.

The protein resides in the cytoplasm. It carries out the reaction [ThiS sulfur-carrier protein]-C-terminal-Gly-aminoethanethioate + 2-iminoacetate + 1-deoxy-D-xylulose 5-phosphate = [ThiS sulfur-carrier protein]-C-terminal Gly-Gly + 2-[(2R,5Z)-2-carboxy-4-methylthiazol-5(2H)-ylidene]ethyl phosphate + 2 H2O + H(+). It participates in cofactor biosynthesis; thiamine diphosphate biosynthesis. In terms of biological role, catalyzes the rearrangement of 1-deoxy-D-xylulose 5-phosphate (DXP) to produce the thiazole phosphate moiety of thiamine. Sulfur is provided by the thiocarboxylate moiety of the carrier protein ThiS. In vitro, sulfur can be provided by H(2)S. The chain is Thiazole synthase from Burkholderia thailandensis (strain ATCC 700388 / DSM 13276 / CCUG 48851 / CIP 106301 / E264).